Consider the following 103-residue polypeptide: Large ribosomal subunit protein bL21 (103 aa).

The protein belongs to the bacterial ribosomal protein bL21 family. Part of the 50S ribosomal subunit. Contacts protein L20.

This protein binds to 23S rRNA in the presence of protein L20. The sequence is that of Large ribosomal subunit protein bL21 from Parvibaculum lavamentivorans (strain DS-1 / DSM 13023 / NCIMB 13966).